The primary structure comprises 242 residues: Agamous-like MADS-box protein MADS4 (242 aa).

An MADS-box domain is found at 1-61; the sequence is MGRGRVELKR…GKLYEFCSSS (61 aa). The 97-residue stretch at 89–185 folds into the K-box domain; sequence ELSSQQEYLK…GTQVNQLQWN (97 aa).

In terms of tissue distribution, expressed in flowers and seeds.

It localises to the nucleus. In terms of biological role, probable transcription factor involved in flower development. This chain is Agamous-like MADS-box protein MADS4, found in Vitis vinifera (Grape).